We begin with the raw amino-acid sequence, 97 residues long: Aspartyl/glutamyl-tRNA(Asn/Gln) amidotransferase subunit C (97 aa).

Belongs to the GatC family. Heterotrimer of A, B and C subunits.

The enzyme catalyses L-glutamyl-tRNA(Gln) + L-glutamine + ATP + H2O = L-glutaminyl-tRNA(Gln) + L-glutamate + ADP + phosphate + H(+). It carries out the reaction L-aspartyl-tRNA(Asn) + L-glutamine + ATP + H2O = L-asparaginyl-tRNA(Asn) + L-glutamate + ADP + phosphate + 2 H(+). Its function is as follows. Allows the formation of correctly charged Asn-tRNA(Asn) or Gln-tRNA(Gln) through the transamidation of misacylated Asp-tRNA(Asn) or Glu-tRNA(Gln) in organisms which lack either or both of asparaginyl-tRNA or glutaminyl-tRNA synthetases. The reaction takes place in the presence of glutamine and ATP through an activated phospho-Asp-tRNA(Asn) or phospho-Glu-tRNA(Gln). This is Aspartyl/glutamyl-tRNA(Asn/Gln) amidotransferase subunit C from Prochlorococcus marinus (strain AS9601).